The sequence spans 272 residues: tRNA uridine(34) hydroxylase (272 aa).

The Rhodanese domain occupies 121–217 (SRSDVYTIDT…YFKSTGNINN (97 aa)). Residue C177 is the Cysteine persulfide intermediate of the active site.

Belongs to the TrhO family.

It carries out the reaction uridine(34) in tRNA + AH2 + O2 = 5-hydroxyuridine(34) in tRNA + A + H2O. Catalyzes oxygen-dependent 5-hydroxyuridine (ho5U) modification at position 34 in tRNAs. In Ehrlichia ruminantium (strain Welgevonden), this protein is tRNA uridine(34) hydroxylase.